The primary structure comprises 145 residues: Partner of bursicon (145 aa).

A signal peptide spans 1 to 28 (MKENFSIMFIHSIFLILIIFIYSNETIA). Cystine bridges form between cysteine 36–cysteine 94, cysteine 60–cysteine 109, cysteine 69–cysteine 135, cysteine 73–cysteine 137, and cysteine 91–cysteine 140. The CTCK domain occupies 36–131 (CETLQSEVHI…NGVMEIKIRE (96 aa)).

Heterodimer of burs and pburs.

It localises to the secreted. In terms of biological role, final heterodimeric neurohormone released at the end of the molting cycle, involved in the sclerotization (tanning) of the insect cuticle, melanization and wing spreading. The protein is Partner of bursicon (pburs) of Apis mellifera (Honeybee).